Consider the following 320-residue polypeptide: Porphobilinogen deaminase (320 aa).

At cysteine 251 the chain carries S-(dipyrrolylmethanemethyl)cysteine.

This sequence belongs to the HMBS family. Monomer. Requires dipyrromethane as cofactor.

The catalysed reaction is 4 porphobilinogen + H2O = hydroxymethylbilane + 4 NH4(+). It functions in the pathway porphyrin-containing compound metabolism; protoporphyrin-IX biosynthesis; coproporphyrinogen-III from 5-aminolevulinate: step 2/4. Tetrapolymerization of the monopyrrole PBG into the hydroxymethylbilane pre-uroporphyrinogen in several discrete steps. In Phenylobacterium zucineum (strain HLK1), this protein is Porphobilinogen deaminase.